The chain runs to 543 residues: Chaperonin GroEL 7 (543 aa).

ATP is bound by residues 30-33, Lys51, 87-91, Gly415, and Asp496; these read TLGP and DGTTT.

This sequence belongs to the chaperonin (HSP60) family. As to quaternary structure, forms a cylinder of 14 subunits composed of two heptameric rings stacked back-to-back. Interacts with the co-chaperonin GroES.

Its subcellular location is the cytoplasm. The catalysed reaction is ATP + H2O + a folded polypeptide = ADP + phosphate + an unfolded polypeptide.. In terms of biological role, together with its co-chaperonin GroES, plays an essential role in assisting protein folding. The GroEL-GroES system forms a nano-cage that allows encapsulation of the non-native substrate proteins and provides a physical environment optimized to promote and accelerate protein folding. This Bradyrhizobium diazoefficiens (strain JCM 10833 / BCRC 13528 / IAM 13628 / NBRC 14792 / USDA 110) protein is Chaperonin GroEL 7.